We begin with the raw amino-acid sequence, 658 residues long: Deoxynucleoside triphosphate triphosphohydrolase SAMHD1 (658 aa).

A disordered region spans residues 23 to 68 (SQPRVSEVAMQSAPLEQPAKRPRCDGSPRTPPSTPPATANLSADDD). Phosphoserine is present on serine 49. Threonine 52 bears the Phosphothreonine mark. A Phosphoserine modification is found at serine 55. Threonine 56 is subject to Phosphothreonine. 2 positions are modified to phosphoserine: serine 64 and serine 125. One can recognise an SAM domain in the interval 77–142 (WEPEDVCSFL…IECIQQLSQS (66 aa)). Residues lysine 148 and valine 149 each contribute to the GTP site. Asparagine 151 contributes to the dGTP binding site. Residues aspartate 169, glutamine 174, and arginine 177 each coordinate GTP. DGTP-binding residues include leucine 182 and valine 188. Positions 196–348 (RFEHSLGVGY…GIDVDKWDYF (153 aa)) constitute an HD domain. Mn(2+) contacts are provided by histidine 199, histidine 238, and aspartate 239. Residues aspartate 239, histidine 247, histidine 265, and glutamate 266 each contribute to the dGTP site. Histidine 265 is an active-site residue. Mn(2+) is bound at residue aspartate 343. 9 residues coordinate dGTP: tyrosine 347, aspartate 351, arginine 365, arginine 395, lysine 397, asparagine 401, tyrosine 417, histidine 419, and lysine 420. 2 residues coordinate GTP: arginine 494 and lysine 498. A Glycyl lysine isopeptide (Lys-Gly) (interchain with G-Cter in SUMO2) cross-link involves residue lysine 509. Lysine 565 lines the GTP pocket. Lysine 565 serves as a coordination point for dGTP. Threonine 634 is subject to Phosphothreonine. Threonine 634 is subject to (Microbial infection) Phosphothreonine.

It belongs to the SAMHD1 family. Homodimer; in absence of GTP and dNTP. Homotetramer; in GTP- and dNTP-bound form. Interacts with MRE11; leading to stimulate the exonuclease activity of MRE11. Interacts with RBBP8/CtIP. Interacts with RBBP8/CtIP. Interacts (via its C-terminus) with CD81. Zn(2+) is required as a cofactor. Phosphorylation at Thr-634 by CDK1 acts as a switch to control deoxynucleoside triphosphate (dNTPase)-dependent and -independent functions. Phosphorylation at Thr-634 takes place in cycling cells: it reduces the stability of the homotetramer, impairing the dNTPase activity and subsequent ability to restrict infection by viruses. It also inhibits ability to suppress LINE-1 retrotransposon activity. In contrast, phosphorylation at Thr-634 promotes DNA end resection at stalled replication forks in response to DNA damage. In terms of processing, (Microbial infection) Phosphorylation at Thr-634 by mouse cytomegalovirus kinase M97 leads to a reduced level of dNTP hydrolase activity and the loss of viral restriction. Post-translationally, not phosphorylated by CDK1 at the C-terminus.

The protein resides in the nucleus. Its subcellular location is the chromosome. It carries out the reaction a 2'-deoxyribonucleoside 5'-triphosphate + H2O = a 2'-deoxyribonucleoside + triphosphate + H(+). It catalyses the reaction dATP + H2O = 2'-deoxyadenosine + triphosphate + H(+). The enzyme catalyses dCTP + H2O = 2'-deoxycytidine + triphosphate + H(+). The catalysed reaction is dGTP + H2O = 2'-deoxyguanosine + triphosphate + H(+). It carries out the reaction dTTP + H2O = thymidine + triphosphate + H(+). Its activity is regulated as follows. Allosterically activated and regulated via the combined actions of GTP and dNTPs (dATP, dGTP, dTTP and dCTP): Allosteric site 1 binds GTP, while allosteric site 2 binds dNTP. Allosteric activation promotes the formation of highly active homotetramers. Isoform 1: Phosphorylation at Thr-634 impairs homotetramerization, thereby inhibiting dNTPase activity, leading to reduced ability to restrict infection by viruses. Protein that acts both as a host restriction factor involved in defense response to virus and as a regulator of DNA end resection at stalled replication forks. Has deoxynucleoside triphosphate (dNTPase) activity, which is required to restrict infection by viruses: dNTPase activity reduces cellular dNTP levels to levels too low for retroviral reverse transcription to occur, blocking early-stage virus replication in dendritic and other myeloid cells. Likewise, suppresses LINE-1 retrotransposon activity. In addition to virus restriction, dNTPase activity acts as a regulator of DNA precursor pools by regulating dNTP pools. Phosphorylation at Thr-634 acts as a switch to control dNTPase-dependent and -independent functions: it inhibits dNTPase activity and ability to restrict infection by viruses, while it promotes DNA end resection at stalled replication forks. Functions during S phase at stalled DNA replication forks to promote the resection of gapped or reversed forks: acts by stimulating the exonuclease activity of MRE11, activating the ATR-CHK1 pathway and allowing the forks to restart replication. Its ability to promote degradation of nascent DNA at stalled replication forks is required to prevent induction of type I interferons, thereby preventing chronic inflammation. Ability to promote DNA end resection at stalled replication forks is independent of dNTPase activity. Enhances immunoglobulin hypermutation in B-lymphocytes by promoting transversion mutation. The sequence is that of Deoxynucleoside triphosphate triphosphohydrolase SAMHD1 from Mus musculus (Mouse).